The following is a 247-amino-acid chain: Protein NipSnap homolog 3A (247 aa).

Residues lysine 48 and lysine 166 each carry the N6-acetyllysine modification.

Belongs to the NipSnap family.

Its subcellular location is the cytoplasm. The protein localises to the cytosol. The chain is Protein NipSnap homolog 3A (NIPSNAP3A) from Pongo abelii (Sumatran orangutan).